Here is a 468-residue protein sequence, read N- to C-terminus: UDP-N-acetylmuramate--L-alanine ligase (468 aa).

An ATP-binding site is contributed by 121 to 127 (GSHGKTT).

This sequence belongs to the MurCDEF family.

Its subcellular location is the cytoplasm. The catalysed reaction is UDP-N-acetyl-alpha-D-muramate + L-alanine + ATP = UDP-N-acetyl-alpha-D-muramoyl-L-alanine + ADP + phosphate + H(+). It functions in the pathway cell wall biogenesis; peptidoglycan biosynthesis. Functionally, cell wall formation. The polypeptide is UDP-N-acetylmuramate--L-alanine ligase (Borrelia garinii subsp. bavariensis (strain ATCC BAA-2496 / DSM 23469 / PBi) (Borreliella bavariensis)).